Reading from the N-terminus, the 433-residue chain is D-amino acid dehydrogenase (433 aa).

3 to 17 (VLVLGSGVIGTASAY) is an FAD binding site.

Belongs to the DadA oxidoreductase family. The cofactor is FAD.

The catalysed reaction is a D-alpha-amino acid + A + H2O = a 2-oxocarboxylate + AH2 + NH4(+). It functions in the pathway amino-acid degradation; D-alanine degradation; NH(3) and pyruvate from D-alanine: step 1/1. In terms of biological role, oxidative deamination of D-amino acids. The polypeptide is D-amino acid dehydrogenase (Pseudomonas putida (strain W619)).